We begin with the raw amino-acid sequence, 42 residues long: Bacteriocin bavaricin-MN (42 aa).

A disulfide bridge links cysteine 10 with cysteine 15.

It belongs to the bacteriocin class IIA/YGNGV family.

Its subcellular location is the secreted. In terms of biological role, has antimicrobial activity. In Latilactobacillus sakei (Lactobacillus sakei), this protein is Bacteriocin bavaricin-MN.